We begin with the raw amino-acid sequence, 493 residues long: Guanosine-5'-triphosphate,3'-diphosphate pyrophosphatase (493 aa).

This sequence belongs to the GppA/Ppx family. GppA subfamily.

The catalysed reaction is guanosine 3'-diphosphate 5'-triphosphate + H2O = guanosine 3',5'-bis(diphosphate) + phosphate + H(+). Its pathway is purine metabolism; ppGpp biosynthesis; ppGpp from GTP: step 2/2. Functionally, catalyzes the conversion of pppGpp to ppGpp. Guanosine pentaphosphate (pppGpp) is a cytoplasmic signaling molecule which together with ppGpp controls the 'stringent response', an adaptive process that allows bacteria to respond to amino acid starvation, resulting in the coordinated regulation of numerous cellular activities. The polypeptide is Guanosine-5'-triphosphate,3'-diphosphate pyrophosphatase (Salmonella heidelberg (strain SL476)).